We begin with the raw amino-acid sequence, 312 residues long: Formate dehydrogenase iron-sulfur subunit (312 aa).

4 4Fe-4S ferredoxin-type domains span residues 35-65 (IAKLIDVSTCIGCKACQVGCSEWNDIRSDIN), 97-129 (LEWLIRKDGCMHCTEPGCLKACPAPGAIIQYAN), 130-159 (GIVDFQSDKCIGCGYCIAGCPFNIPRMNPE), and 164-195 (YKCTLCVDRVSVGQEPACVKTCPTGAIRFGSK). The [4Fe-4S] cluster site is built by Cys44, Cys47, Cys50, Cys54, Cys106, Cys109, Cys114, Cys118, Cys139, Cys142, Cys145, Cys149, Cys166, Cys169, Cys181, and Cys185.

As to quaternary structure, formate dehydrogenase is a membrane-bound complex, formed by subunits alpha, beta and gamma. It depends on [4Fe-4S] cluster as a cofactor.

The protein resides in the cell membrane. Its function is as follows. Allows to use formate as major electron donor during aerobic respiration. The beta chain is an electron transfer unit containing 4 cysteine clusters involved in the formation of iron-sulfur centers. Electrons are transferred from the gamma chain to the molybdenum cofactor of the alpha subunit. The protein is Formate dehydrogenase iron-sulfur subunit (fdxH) of Haemophilus influenzae (strain ATCC 51907 / DSM 11121 / KW20 / Rd).